The sequence spans 445 residues: StAR-related lipid transfer protein 3 (445 aa).

Topologically, residues methionine 1 to arginine 51 are cytoplasmic. An MENTAL domain is found at isoleucine 46 to serine 217. Residues threonine 52 to leucine 72 form a helical membrane-spanning segment. At asparagine 73–serine 94 the chain is on the extracellular side. The chain crosses the membrane as a helical span at residues phenylalanine 95–valine 115. Over leucine 116 to histidine 120 the chain is Cytoplasmic. Residues tryptophan 121–leucine 141 traverse the membrane as a helical segment. At serine 142 to glycine 148 the chain is on the extracellular side. Residues alanine 149–leucine 169 traverse the membrane as a helical segment. The Cytoplasmic segment spans residues aspartate 170–alanine 445. Short sequence motifs (FFAT) lie at residues glutamine 206 to glutamate 212 and phenylalanine 207 to glutamate 212. Phosphoserine is present on residues serine 209, serine 217, and serine 221. Positions valine 248–alanine 443 constitute an START domain.

The protein belongs to the STARD3 family. As to quaternary structure, homodimer. Interacts (via the MENTAL domain) with STARD3NL. Interacts (via phosphorylated FFAT motif) with VAPA (via MSP domain). Interacts (via phosphorylated FFAT motif) with VAPB (via MSP domain). Interacts (via phosphorylated FFAT motif) with MOSPD2 (via MSP domain); this interaction allows enrichment of MOSPD2 around endosomes. Phosphorylation at Ser-209 is necessary and sufficient for the direct interaction of the phosphorylated FFAT motif with the MSP domain of MOSPD2, VAPA and VAPB and allows the tethering of two membranes that participates in the formation of ER-endosome contacts. Phosphorylation of the FFAT motif leads to conformation changes. Additional phosphorylations around the core FFAT motif (QFYSPPE) are not essential but strengthen the interaction with MOSPD2, VAPA and VAPB. Phosphorylation at Ser-209 of FFAT motif drives membrane tethering between the endoplasmic reticulum and late endosomes via interaction with VAPA and VAPB that in turn allows the efficient transport of sterol mediated by the START domain. As to expression, present in retina. Localizes to all neurons of macular retina and especially cone inner segments and axons (at protein level).

Its subcellular location is the late endosome membrane. The enzyme catalyses cholesterol(in) = cholesterol(out). In terms of biological role, sterol-binding protein that mediates cholesterol transport from the endoplasmic reticulum to endosomes. The sterol transport mechanism is triggered by phosphorylation of FFAT motif that leads to membrane tethering between the endoplasmic reticulum and late endosomes via interaction with VAPA and VAPB. Acts as a lipid transfer protein that redirects sterol to the endosome at the expense of the cell membrane and favors membrane formation inside endosomes. May also mediate cholesterol transport between other membranes, such as mitochondria membrane or cell membrane. However, such results need additional experimental evidences; probably mainly mediates cholesterol transport from the endoplasmic reticulum to endosomes. Does not activate transcriptional cholesterol sensing. Able to bind other lipids, such as lutein, a xanthophyll carotenoids that form the macular pigment of the retina. Able to bind other lipids, such as lutein, a xanthophyll carotenoids that form the macular pigment of the retina. This Macaca mulatta (Rhesus macaque) protein is StAR-related lipid transfer protein 3.